A 482-amino-acid polypeptide reads, in one-letter code: Capsule synthesis positive regulator AcpB (482 aa).

PRD domains lie at 165-270 and 283-395; these read PFEK…YKDI and EGNL…YTSN.

This sequence belongs to the AtxA/AcpA family.

AcpB and AcpA regulate cap gene expression and capsule synthesis. This chain is Capsule synthesis positive regulator AcpB (acpB), found in Bacillus anthracis.